Reading from the N-terminus, the 513-residue chain is Ribonuclease Y (513 aa).

The helical transmembrane segment at 3 to 23 (IGTLLLFTFLGLVAGATAVWL) threads the bilayer. The tract at residues 77–96 (LQSVESKLKSREQTLNQRQE) is disordered. Positions 82–96 (SKLKSREQTLNQRQE) are enriched in basic and acidic residues. The KH domain occupies 203–263 (SVTVFHIESD…VRREIARLAL (61 aa)). The region spanning 329–422 (LLQHSRETAN…VQVCDAISGA (94 aa)) is the HD domain.

The protein belongs to the RNase Y family.

The protein resides in the cell membrane. In terms of biological role, endoribonuclease that initiates mRNA decay. The polypeptide is Ribonuclease Y (Porphyromonas gingivalis (strain ATCC BAA-308 / W83)).